The sequence spans 296 residues: 4-hydroxy-tetrahydrodipicolinate synthase (296 aa).

Thr-49 is a binding site for pyruvate. Residue Tyr-137 is the Proton donor/acceptor of the active site. The active-site Schiff-base intermediate with substrate is Lys-166. Ile-208 lines the pyruvate pocket.

It belongs to the DapA family. In terms of assembly, homotetramer; dimer of dimers.

It is found in the cytoplasm. The catalysed reaction is L-aspartate 4-semialdehyde + pyruvate = (2S,4S)-4-hydroxy-2,3,4,5-tetrahydrodipicolinate + H2O + H(+). Its pathway is amino-acid biosynthesis; L-lysine biosynthesis via DAP pathway; (S)-tetrahydrodipicolinate from L-aspartate: step 3/4. Its function is as follows. Catalyzes the condensation of (S)-aspartate-beta-semialdehyde [(S)-ASA] and pyruvate to 4-hydroxy-tetrahydrodipicolinate (HTPA). The protein is 4-hydroxy-tetrahydrodipicolinate synthase of Chlorobium chlorochromatii (strain CaD3).